A 215-amino-acid polypeptide reads, in one-letter code: Keratin-associated protein 26-1 (215 aa).

It belongs to the PMG family. Interacts with hair keratins.

Its function is as follows. In the hair cortex, hair keratin intermediate filaments are embedded in an interfilamentous matrix, consisting of hair keratin-associated proteins (KRTAP), which are essential for the formation of a rigid and resistant hair shaft through their extensive disulfide bond cross-linking with abundant cysteine residues of hair keratins. The matrix proteins include the high-sulfur and high-glycine-tyrosine keratins. The chain is Keratin-associated protein 26-1 from Mus musculus (Mouse).